We begin with the raw amino-acid sequence, 328 residues long: MPSANVSPPCPSGVRGGGMGPKAKAEASKPHPQIPVKLPFVTAPDALAAAKARMRDLAAAYVAALPGRDTHSLMAGVPGVDLKFMPLGWRDGAFDPEHNVILINSAARPERQRFTLAHEIGHAILLGDDDLLSDIHDAYEGERLEQVIETLCNVAAAAILMPEPVIAEMLERFGPTGRALAELAKRAEVSASSALYALTEQTPVPVIYAVCAPGKPPREQAASDEDAGPSTEKVLTVRASSSTRGVKYTLASGTPVPADHPAALALATGMEVREESYVPFRSGRKMKAEVDAYPSRGIVAVSFEFDPARLGRKDSEQADRDEPQDAAQ.

The segment at 1–31 (MPSANVSPPCPSGVRGGGMGPKAKAEASKPH) is disordered. Residue histidine 118 participates in Zn(2+) binding. Glutamate 119 is an active-site residue. The Zn(2+) site is built by histidine 122 and glutamate 149. 2 disordered regions span residues 217–238 (PREQ…LTVR) and 309–328 (RLGR…DAAQ).

Functionally, plays a central regulatory role in DNA repair and protection pathways in response to radiation stress. Acts as a site-specific metalloprotease that cleaves and inactivates the repressor protein DdrO, resulting in induced expression of genes required for DNA repair and cell survival after exposure to radiation. Regulates the expression of dozens of proteins from different pathways, including the important DNA repair proteins RecA and PprA. Binds to the promoters of recA and pprA. In Deinococcus radiodurans (strain ATCC 13939 / DSM 20539 / JCM 16871 / CCUG 27074 / LMG 4051 / NBRC 15346 / NCIMB 9279 / VKM B-1422 / R1), this protein is Radiation response metalloprotease IrrE.